An 85-amino-acid polypeptide reads, in one-letter code: uncharacterized protein (85 aa).

The next 2 membrane-spanning stretches (helical) occupy residues 12–34 and 49–71; these read ICLS…VLAF and IPEF…NGFV.

The protein resides in the cell membrane. This is an uncharacterized protein from Archaeoglobus fulgidus (strain ATCC 49558 / DSM 4304 / JCM 9628 / NBRC 100126 / VC-16).